The chain runs to 101 residues: MSQKIRIKLKSYDHNLVDKSAEKIVRTVKATGAIVSGPIPLPTHKRIFTVNRSTFVNKKSREQFELSSYKRLIDIYSSTAKTVDALMKLELPSGVEVEIKV.

Belongs to the universal ribosomal protein uS10 family. In terms of assembly, part of the 30S ribosomal subunit.

In terms of biological role, involved in the binding of tRNA to the ribosomes. The protein is Small ribosomal subunit protein uS10 of Phocaeicola vulgatus (strain ATCC 8482 / DSM 1447 / JCM 5826 / CCUG 4940 / NBRC 14291 / NCTC 11154) (Bacteroides vulgatus).